Consider the following 260-residue polypeptide: Ribosomal RNA small subunit methyltransferase G (260 aa).

S-adenosyl-L-methionine-binding residues include G111, F116, and R181.

It belongs to the methyltransferase superfamily. RNA methyltransferase RsmG family.

Its subcellular location is the cytoplasm. It catalyses the reaction guanosine(527) in 16S rRNA + S-adenosyl-L-methionine = N(7)-methylguanosine(527) in 16S rRNA + S-adenosyl-L-homocysteine. Functionally, specifically methylates the N7 position of guanine in position 527 of 16S rRNA. This is Ribosomal RNA small subunit methyltransferase G from Nitrobacter hamburgensis (strain DSM 10229 / NCIMB 13809 / X14).